Reading from the N-terminus, the 573-residue chain is DEAD-box ATP-dependent RNA helicase 47B (573 aa).

The Q motif signature appears at 131–159 (KSFEELGLPPLLIDRLNKEGLSTPTEVQS). The Helicase ATP-binding domain occupies 162–362 (IPIISQKHDA…RSWGHDPVLV (201 aa)). 175-182 (SYTGSGKT) provides a ligand contact to ATP. The short motif at 293-296 (DEVD) is the DEAD box element. Positions 421 to 565 (TLRRCIHALE…PCEFTEGKLL (145 aa)) constitute a Helicase C-terminal domain.

This sequence belongs to the DEAD box helicase family.

It carries out the reaction ATP + H2O = ADP + phosphate + H(+). The protein is DEAD-box ATP-dependent RNA helicase 47B of Oryza sativa subsp. japonica (Rice).